The sequence spans 255 residues: tRNA uridine(34) hydroxylase (255 aa).

The region spanning 125–219 (AAPDTLLIDT…YLEGIPESES (95 aa)) is the Rhodanese domain. C179 (cysteine persulfide intermediate) is an active-site residue.

The protein belongs to the TrhO family.

It catalyses the reaction uridine(34) in tRNA + AH2 + O2 = 5-hydroxyuridine(34) in tRNA + A + H2O. In terms of biological role, catalyzes oxygen-dependent 5-hydroxyuridine (ho5U) modification at position 34 in tRNAs. The polypeptide is tRNA uridine(34) hydroxylase (Nitrobacter hamburgensis (strain DSM 10229 / NCIMB 13809 / X14)).